The sequence spans 360 residues: Cyclin-dependent kinase 10 (360 aa).

Residues 39-323 form the Protein kinase domain; the sequence is FEKLNRIGEG…SGDCLESSYF (285 aa). Residues 45-53 and Lys-68 contribute to the ATP site; that span reads IGEGTYGIV. Residue Asp-163 is the Proton acceptor of the active site. Position 196 is a phosphothreonine (Thr-196). Positions 334–360 are disordered; that stretch reads LMPTFPHHRNKRAAPAAAEGQSKRCRP.

This sequence belongs to the protein kinase superfamily. CMGC Ser/Thr protein kinase family. CDC2/CDKX subfamily. In terms of assembly, heterodimer with CCNQ, the interaction is required for kinase activity. Interacts with ETS2. Interacts with PRK2.

It is found in the cytoplasm. Its subcellular location is the cytoskeleton. The protein resides in the cilium basal body. The enzyme catalyses L-seryl-[protein] + ATP = O-phospho-L-seryl-[protein] + ADP + H(+). The catalysed reaction is L-threonyl-[protein] + ATP = O-phospho-L-threonyl-[protein] + ADP + H(+). Functionally, cyclin-dependent kinase that phosphorylates the transcription factor ETS2 (in vitro) and positively controls its proteasomal degradation (in cells). Involved in the regulation of actin cytoskeleton organization through the phosphorylation of actin dynamics regulators such as PKN2. Is a negative regulator of ciliogenesis through phosphorylation of PKN2 and promotion of RhoA signaling. The sequence is that of Cyclin-dependent kinase 10 (Cdk10) from Mus musculus (Mouse).